Here is a 347-residue protein sequence, read N- to C-terminus: Ribosomal RNA small subunit methyltransferase C (347 aa).

The protein belongs to the methyltransferase superfamily. RsmC family. Monomer.

The protein localises to the cytoplasm. It carries out the reaction guanosine(1207) in 16S rRNA + S-adenosyl-L-methionine = N(2)-methylguanosine(1207) in 16S rRNA + S-adenosyl-L-homocysteine + H(+). Its function is as follows. Specifically methylates the guanine in position 1207 of 16S rRNA in the 30S particle. The chain is Ribosomal RNA small subunit methyltransferase C from Shewanella baltica (strain OS155 / ATCC BAA-1091).